The following is a 732-amino-acid chain: Polyadenylate-binding protein, cytoplasmic and nuclear (732 aa).

A compositionally biased stretch (polar residues) spans 1-19 (MSAETSTTPAPAENTNGTP). Residues 1–26 (MSAETSTTPAPAENTNGTPDNAPAPE) are disordered. 4 consecutive RRM domains span residues 42-120 (ASLY…WSQR), 130-207 (GNVF…HHIS), 223-300 (TNIY…RAQK), and 326-454 (VNLY…LAQR). Disordered regions lie at residues 357 to 413 (VMRD…KKPL) and 706 to 732 (MKNK…ENKA). Residues 371-412 (SETKESANKENEKAAEGEKEPAAEEKEKEEKKEAEQKPEKKP) are compositionally biased toward basic and acidic residues. The PABC domain occupies 630–707 (VGVLTAQALS…ALSVYDEYMK (78 aa)).

It belongs to the polyadenylate-binding protein type-1 family.

It is found in the cytoplasm. It localises to the nucleus. Its function is as follows. Binds the poly(A) tail of mRNA. Appears to be an important mediator of the multiple roles of the poly(A) tail in mRNA biogenesis, stability and translation. In the nucleus, involved in both mRNA cleavage and polyadenylation. Is also required for efficient mRNA export to the cytoplasm. Acts in concert with a poly(A)-specific nuclease (PAN) to affect poly(A) tail shortening, which may occur concomitantly with either nucleocytoplasmic mRNA transport or translational initiation. In the cytoplasm, stimulates translation initiation and regulates mRNA decay through translation termination-coupled poly(A) shortening, probably mediated by PAN. In Emericella nidulans (strain FGSC A4 / ATCC 38163 / CBS 112.46 / NRRL 194 / M139) (Aspergillus nidulans), this protein is Polyadenylate-binding protein, cytoplasmic and nuclear (pab1).